Reading from the N-terminus, the 127-residue chain is uncharacterized protein (127 aa).

A signal peptide spans 1-16 (MIKKIIFGIAILLSLS). Cys-17 carries N-palmitoyl cysteine lipidation. A lipid anchor (S-diacylglycerol cysteine) is attached at Cys-17. The stretch at 56 to 101 (EVRKEIQEYRVEIVDINKKKRELYNSLSKEAQNFLAEQQKYKQKLS) forms a coiled coil. The segment at 101 to 127 (SISKLPTEDDSPNNTANSKDNKDTDTK) is disordered.

It localises to the cell membrane. This is an uncharacterized protein from Rickettsia felis (strain ATCC VR-1525 / URRWXCal2) (Rickettsia azadi).